The primary structure comprises 208 residues: Thymidylate kinase (208 aa).

11 to 18 lines the ATP pocket; the sequence is GIEGAGKT.

Belongs to the thymidylate kinase family.

It catalyses the reaction dTMP + ATP = dTDP + ADP. Its function is as follows. Phosphorylation of dTMP to form dTDP in both de novo and salvage pathways of dTTP synthesis. In Hahella chejuensis (strain KCTC 2396), this protein is Thymidylate kinase.